Consider the following 1161-residue polypeptide: Nardilysin (1161 aa).

The signal sequence occupies residues 1–18 (MLRRVAVAAVCVTGRKLR). Disordered regions lie at residues 49–103 (MPGR…IIKS) and 130–218 (VEGK…KKTT). Ser85, Ser91, and Ser93 each carry phosphoserine. The span at 138 to 209 (TDEEEEEEEE…EENELEELEE (72 aa)) shows a compositional bias: acidic residues. His244 lines the Zn(2+) pocket. Glu247 functions as the Proton acceptor in the catalytic mechanism. Zn(2+) contacts are provided by His248 and Glu325.

It belongs to the peptidase M16 family. Interacts with BACE1 and NRG1. Zn(2+) serves as cofactor. In terms of tissue distribution, highly expressed in brain of early postnatal mice but expressed at a lower level in the brains of adult mice. Expression is high in cortical neurons, and lower in neurons in the striatum. Very low expression detected in the corpus callosum. Also expressed in the gray matter in spinal cord and dorsal root ganglia.

The protein localises to the mitochondrion. It localises to the cell projection. It is found in the dendrite. It carries out the reaction Hydrolysis of polypeptides, preferably at -Xaa-|-Arg-Lys-, and less commonly at -Arg-|-Arg-Xaa-, in which Xaa is not Arg or Lys.. Its function is as follows. Cleaves peptide substrates on the N-terminus of arginine residues in dibasic pairs. Is a critical activator of BACE1- and ADAM17-mediated pro-neuregulin ectodomain shedding, involved in the positive regulation of axonal maturation and myelination. Required for proper functioning of 2-oxoglutarate dehydrogenase (OGDH). The sequence is that of Nardilysin from Mus musculus (Mouse).